Consider the following 643-residue polypeptide: Threonine--tRNA ligase (643 aa).

The TGS domain occupies 1-61 (MPIITLPDGS…EQDATLEIIT (61 aa)). The interval 243-534 (DHRKIGKALD…ITEEYAGFFP (292 aa)) is catalytic. The Zn(2+) site is built by cysteine 334, histidine 385, and histidine 511.

Belongs to the class-II aminoacyl-tRNA synthetase family. In terms of assembly, homodimer. Requires Zn(2+) as cofactor.

The protein resides in the cytoplasm. The enzyme catalyses tRNA(Thr) + L-threonine + ATP = L-threonyl-tRNA(Thr) + AMP + diphosphate + H(+). Its function is as follows. Catalyzes the attachment of threonine to tRNA(Thr) in a two-step reaction: L-threonine is first activated by ATP to form Thr-AMP and then transferred to the acceptor end of tRNA(Thr). Also edits incorrectly charged L-seryl-tRNA(Thr). The protein is Threonine--tRNA ligase of Haemophilus influenzae (strain ATCC 51907 / DSM 11121 / KW20 / Rd).